The primary structure comprises 469 residues: Mitochondrial distribution and morphology protein 10 (469 aa).

The protein belongs to the MDM10 family. As to quaternary structure, component of the ER-mitochondria encounter structure (ERMES) or MDM complex, composed of MMM1, MDM10, MDM12 and MDM34. Associates with the mitochondrial outer membrane sorting assembly machinery SAM(core) complex.

It is found in the mitochondrion outer membrane. Functionally, component of the ERMES/MDM complex, which serves as a molecular tether to connect the endoplasmic reticulum and mitochondria. Components of this complex are involved in the control of mitochondrial shape and protein biogenesis and may function in phospholipid exchange. MDM10 is involved in the late assembly steps of the general translocase of the mitochondrial outer membrane (TOM complex). Functions in the TOM40-specific route of the assembly of outer membrane beta-barrel proteins, including the association of TOM40 with the receptor TOM22 and small TOM proteins. Can associate with the SAM(core) complex as well as the MDM12-MMM1 complex, both involved in late steps of the major beta-barrel assembly pathway, that is responsible for biogenesis of all outer membrane beta-barrel proteins. May act as a switch that shuttles between both complexes and channels precursor proteins into the TOM40-specific pathway. Plays a role in mitochondrial morphology and in the inheritance of mitochondria. The protein is Mitochondrial distribution and morphology protein 10 of Scheffersomyces stipitis (strain ATCC 58785 / CBS 6054 / NBRC 10063 / NRRL Y-11545) (Yeast).